The chain runs to 842 residues: Glucans biosynthesis glucosyltransferase H (842 aa).

Transmembrane regions (helical) follow at residues 140–160, 194–214, 513–533, 568–588, 600–620, 622–642, 656–676, and 680–700; these read ILLL…KTIL, ILIL…TALM, VFLT…FLAL, IALF…SIIL, FIRV…LAPV, MLFH…VWNS, FMRH…MAWL, and FLFW…VSAI.

This sequence belongs to the glycosyltransferase 2 family. OpgH subfamily.

It localises to the cell inner membrane. Its pathway is glycan metabolism; osmoregulated periplasmic glucan (OPG) biosynthesis. Functionally, involved in the biosynthesis of osmoregulated periplasmic glucans (OPGs). This Klebsiella pneumoniae (strain 342) protein is Glucans biosynthesis glucosyltransferase H.